Consider the following 605-residue polypeptide: Indole-3-acetic acid-amido synthetase GH3.8 (605 aa).

Residues Ser115, 342–346 (MYASS), Tyr365, Asp421, and Arg440 contribute to the AMP site.

This sequence belongs to the IAA-amido conjugating enzyme family. Expressed in the inner floral organs (lodicules, stamens and carpels) and at lower levels in lemmas and paleas.

In terms of biological role, catalyzes the synthesis of indole-3-acetic acid (IAA)-amino acid conjugates, providing a mechanism for the plant to cope with the presence of excessive free auxin. Produces more IAA-Asp levels than IAA-Ala levels in vitro. May participate in the activation of disease resistance by preventing the accumulation of free IAA, which reduces the expression of a group of auxin-responsive genes encoding expansins that control cell wall loosening and expansion. Contributes to late events in stamen and carpel differentiation, and influences floret fertility. The chain is Indole-3-acetic acid-amido synthetase GH3.8 (GH3.8) from Oryza sativa subsp. indica (Rice).